The sequence spans 122 residues: Large ribosomal subunit protein uL14 (122 aa).

The protein belongs to the universal ribosomal protein uL14 family. As to quaternary structure, part of the 50S ribosomal subunit. Forms a cluster with proteins L3 and L19. In the 70S ribosome, L14 and L19 interact and together make contacts with the 16S rRNA in bridges B5 and B8.

In terms of biological role, binds to 23S rRNA. Forms part of two intersubunit bridges in the 70S ribosome. The chain is Large ribosomal subunit protein uL14 from Bacillus pumilus (strain SAFR-032).